Consider the following 224-residue polypeptide: 7-cyano-7-deazaguanine synthase (224 aa).

8–18 (LSGGMDSAAVI) provides a ligand contact to ATP. 4 residues coordinate Zn(2+): Cys186, Cys196, Cys199, and Cys202.

This sequence belongs to the QueC family. Zn(2+) is required as a cofactor.

It catalyses the reaction 7-carboxy-7-deazaguanine + NH4(+) + ATP = 7-cyano-7-deazaguanine + ADP + phosphate + H2O + H(+). It functions in the pathway purine metabolism; 7-cyano-7-deazaguanine biosynthesis. In terms of biological role, catalyzes the ATP-dependent conversion of 7-carboxy-7-deazaguanine (CDG) to 7-cyano-7-deazaguanine (preQ(0)). The chain is 7-cyano-7-deazaguanine synthase from Xanthomonas campestris pv. campestris (strain 8004).